A 163-amino-acid polypeptide reads, in one-letter code: MGIFAEAETWVAVAFVILMALFAYLGVHRTVLQALDNRRARIKAELDEARKLKDEAAKLLADYRARRAQAEREAEAIISSAKADAERIAAESKAKLEDFVARRTKTAESKIALAEAQAVADVRAAAAEAAVSAAATILSQSVKGQVADDLLGKGIQEVRSKLN.

The chain crosses the membrane as a helical span at residues 7 to 27 (AETWVAVAFVILMALFAYLGV).

Belongs to the ATPase B chain family. As to quaternary structure, F-type ATPases have 2 components, F(1) - the catalytic core - and F(0) - the membrane proton channel. F(1) has five subunits: alpha(3), beta(3), gamma(1), delta(1), epsilon(1). F(0) has three main subunits: a(1), b(2) and c(10-14). The alpha and beta chains form an alternating ring which encloses part of the gamma chain. F(1) is attached to F(0) by a central stalk formed by the gamma and epsilon chains, while a peripheral stalk is formed by the delta and b chains.

Its subcellular location is the cell inner membrane. In terms of biological role, f(1)F(0) ATP synthase produces ATP from ADP in the presence of a proton or sodium gradient. F-type ATPases consist of two structural domains, F(1) containing the extramembraneous catalytic core and F(0) containing the membrane proton channel, linked together by a central stalk and a peripheral stalk. During catalysis, ATP synthesis in the catalytic domain of F(1) is coupled via a rotary mechanism of the central stalk subunits to proton translocation. Its function is as follows. Component of the F(0) channel, it forms part of the peripheral stalk, linking F(1) to F(0). This chain is ATP synthase subunit b 1, found in Rhodopseudomonas palustris (strain BisB5).